The chain runs to 334 residues: L-lactate dehydrogenase A chain (334 aa).

NAD(+) is bound by residues 30–58 (GQVG…LEDK) and R100. Substrate-binding residues include R107, N139, and R170. N139 contacts NAD(+). Residue H194 is the Proton acceptor of the active site. Residue T249 participates in substrate binding.

Belongs to the LDH/MDH superfamily. LDH family. As to quaternary structure, homotetramer.

The protein resides in the cytoplasm. It catalyses the reaction (S)-lactate + NAD(+) = pyruvate + NADH + H(+). It participates in fermentation; pyruvate fermentation to lactate; (S)-lactate from pyruvate: step 1/1. Functionally, interconverts simultaneously and stereospecifically pyruvate and lactate with concomitant interconversion of NADH and NAD(+). This chain is L-lactate dehydrogenase A chain (ldha), found in Xenopus laevis (African clawed frog).